A 954-amino-acid polypeptide reads, in one-letter code: Centrosomal protein of 112 kDa (954 aa).

Positions 276 to 954 form a coiled coil; sequence QKHDAEVQKI…EELTTYQSRR (679 aa).

It is found in the cytoplasm. Its subcellular location is the cytoskeleton. The protein localises to the microtubule organizing center. The protein resides in the centrosome. The sequence is that of Centrosomal protein of 112 kDa (Cep112) from Mus musculus (Mouse).